Reading from the N-terminus, the 356-residue chain is Putative mitogen-activated protein kinase 14C (356 aa).

Positions 20 to 305 constitute a Protein kinase domain; the sequence is YEFVRFLGGG…AAEAMLHPYL (286 aa). ATP-binding positions include 26-34 and lysine 49; that span reads LGGGSFGQV. The active-site Proton acceptor is aspartate 147. Residue threonine 177 is modified to Phosphothreonine.

Belongs to the protein kinase superfamily. CMGC Ser/Thr protein kinase family. MAP kinase subfamily. The cofactor is Mg(2+). In terms of processing, the phosphorylation on Thr-177 activates the enzyme. A conserved Tyr, which must also be phosphorylated to activate the enzyme in closely related sequences, is replaced by His-179 in this sequence.

The catalysed reaction is L-seryl-[protein] + ATP = O-phospho-L-seryl-[protein] + ADP + H(+). It catalyses the reaction L-threonyl-[protein] + ATP = O-phospho-L-threonyl-[protein] + ADP + H(+). Kinase involved in a signal transduction pathway. The chain is Putative mitogen-activated protein kinase 14C (p38c) from Drosophila melanogaster (Fruit fly).